Here is a 259-residue protein sequence, read N- to C-terminus: Major prion protein (259 aa).

The N-terminal stretch at 1–24 is a signal peptide; that stretch reads MGKIQLGYWILVLFIVTWSDLGLC. The segment at 25-235 is interaction with GRB2, ERI3 and SYN1; sequence KKPKPRPGGG…EYEAAAQRAY (211 aa). Residues 29–110 are disordered; that stretch reads PRPGGGWNSG…GYNKWKPDKP (82 aa). Positions 63, 64, 72, 74, 82, 84, 92, and 94 each coordinate Cu(2+). Residues 91-101 show a composition bias toward gly residues; it reads PHGGSNWGQGG. Cysteine 184 and cysteine 219 form a disulfide bridge. 2 N-linked (GlcNAc...) asparagine glycosylation sites follow: asparagine 186 and asparagine 202. A lipid anchor (GPI-anchor amidated asparagine) is attached at asparagine 236. The propeptide at 237–259 is removed in mature form; sequence MAFFSAPPVTLLFLSFLIFLIVS.

This sequence belongs to the prion family. Monomer and homodimer. Has a tendency to aggregate into amyloid fibrils containing a cross-beta spine, formed by a steric zipper of superposed beta-strands. Soluble oligomers may represent an intermediate stage on the path to fibril formation. Copper binding may promote oligomerization. Interacts with GRB2, APP, ERI3/PRNPIP and SYN1. Mislocalized cytosolically exposed PrP interacts with MGRN1; this interaction alters MGRN1 subcellular location and causes lysosomal enlargement. Interacts with KIAA1191.

The protein localises to the cell membrane. It is found in the golgi apparatus. In terms of biological role, its primary physiological function is unclear. Has cytoprotective activity against internal or environmental stresses. May play a role in neuronal development and synaptic plasticity. May be required for neuronal myelin sheath maintenance. May play a role in iron uptake and iron homeostasis. Soluble oligomers are toxic to cultured neuroblastoma cells and induce apoptosis (in vitro). Association with GPC1 (via its heparan sulfate chains) targets PRNP to lipid rafts. Also provides Cu(2+) or Zn(2+) for the ascorbate-mediated GPC1 deaminase degradation of its heparan sulfate side chains. This chain is Major prion protein (PRNP), found in Trichosurus vulpecula (Brush-tailed possum).